We begin with the raw amino-acid sequence, 718 residues long: Potassium channel KAT1 (718 aa).

Topologically, residues 1 to 60 (MTQAHSKSCFHQFWDGLQIKRSSDSFTVELLPSLGATINHSNKLQKFIISPYDPRYRSWE) are cytoplasmic. A helical transmembrane segment spans residues 61 to 81 (LFLIVLVVYSAWICPFELAFL). The Extracellular portion of the chain corresponds to 82-88 (RDLPSKL). Residues 89 to 109 (LLVENIVDIFFAIDIVLTFFV) traverse the membrane as a helical segment. Over 110–132 (AYVDSKTHLLVDDRKRIAMRYLS) the chain is Cytoplasmic. Residues 133-153 (TWFIFDVCSTAPFQPIILLFT) traverse the membrane as a helical segment. At 154–162 (HKGNDIAFK) the chain is on the extracellular side. The chain crosses the membrane as a helical; Voltage-sensor span at residues 163 to 183 (VLNLLRLWRLHRVSSLFARLE). Over 184 to 197 (KDIRFNYFWTRCSK) the chain is Cytoplasmic. Residues 198 to 218 (LISVTLFAVHCAGCFNYMIAD) traverse the membrane as a helical segment. At 219–245 (RYPNPEKTWIGAVMSTFRSESLWTRYI) the chain is on the extracellular side. The pore-forming intramembrane region spans 246-265 (TALYWSITTLTTTGYGDLHA). At 266–269 (ENPT) the chain is on the extracellular side. A helical transmembrane segment spans residues 270 to 290 (EMLFDIVYMMFNLGLTAYLIG). Topologically, residues 291-718 (NMTNLVVHGT…DGDHLFLLEM (428 aa)) are cytoplasmic. 374–493 (LFNGVSGNFI…NILMNNLVQK (120 aa)) contributes to the a nucleoside 3',5'-cyclic phosphate binding site. The tract at residues 560–584 (EATRSSASENENSSMTDKEENHDEV) is disordered. Polar residues predominate over residues 562–574 (TRSSASENENSSM). The segment covering 575–584 (TDKEENHDEV) has biased composition (basic and acidic residues). One can recognise a KHA domain in the interval 647–718 (RVTIHKYRHN…DGDHLFLLEM (72 aa)).

The protein belongs to the potassium channel family. Plant (TC 1.A.1.4) subfamily.

The protein localises to the membrane. Its function is as follows. Probable inward-rectifying potassium channel. Assuming opened or closed conformations in response to the voltage difference across the membrane, the channel is activated by hyperpolarization. The polypeptide is Potassium channel KAT1 (Oryza sativa subsp. japonica (Rice)).